A 361-amino-acid chain; its full sequence is Spermidine/putrescine import ATP-binding protein PotA (361 aa).

One can recognise an ABC transporter domain in the interval 4-234 (LELRDVTRRF…PANRFIADFI (231 aa)). 36–43 (GPSGCGKT) is a binding site for ATP.

This sequence belongs to the ABC transporter superfamily. Spermidine/putrescine importer (TC 3.A.1.11.1) family. The complex is composed of two ATP-binding proteins (PotA), two transmembrane proteins (PotB and PotC) and a solute-binding protein (PotD).

It is found in the cell inner membrane. It carries out the reaction ATP + H2O + polyamine-[polyamine-binding protein]Side 1 = ADP + phosphate + polyamineSide 2 + [polyamine-binding protein]Side 1.. Its function is as follows. Part of the ABC transporter complex PotABCD involved in spermidine/putrescine import. Responsible for energy coupling to the transport system. The polypeptide is Spermidine/putrescine import ATP-binding protein PotA (Nitrosomonas europaea (strain ATCC 19718 / CIP 103999 / KCTC 2705 / NBRC 14298)).